Consider the following 200-residue polypeptide: MELDSGKPLSLLTLDEIDQHEGGIIQSFRTGHTTPYPDPADWLNSEEPPPGVFVTSVEKVLNWSRHYSLWPVMFGLACCAIEMMCMAASRWDLARFGMDIFRASPRQADLMIVAGTLTWKMAPWLKRIYDQMPEPKWVLAMGACGTSGGLFRDSYSVVPGFNMVVPVDVYVPGCPPRPEALLRAIMDIHEKIDKTRIIKR.

Residues C78, C79, C144, and C174 each contribute to the [4Fe-4S] cluster site.

This sequence belongs to the complex I 20 kDa subunit family. NDH-1 is composed of 14 different subunits. Subunits NuoB, C, D, E, F, and G constitute the peripheral sector of the complex. Requires [4Fe-4S] cluster as cofactor.

It is found in the cell membrane. The catalysed reaction is a quinone + NADH + 5 H(+)(in) = a quinol + NAD(+) + 4 H(+)(out). In terms of biological role, NDH-1 shuttles electrons from NADH, via FMN and iron-sulfur (Fe-S) centers, to quinones in the respiratory chain. The immediate electron acceptor for the enzyme in this species is believed to be ubiquinone. Couples the redox reaction to proton translocation (for every two electrons transferred, four hydrogen ions are translocated across the cytoplasmic membrane), and thus conserves the redox energy in a proton gradient. The chain is NADH-quinone oxidoreductase subunit B from Dehalococcoides mccartyi (strain ATCC BAA-2266 / KCTC 15142 / 195) (Dehalococcoides ethenogenes (strain 195)).